The sequence spans 319 residues: Aliphatic sulfonates import ATP-binding protein SsuB 1 (319 aa).

Residues 63–282 form the ABC transporter domain; it reads VTLSGVSKRF…ARASAAFAAL (220 aa). 95–102 contributes to the ATP binding site; the sequence is GRSGCGKS.

This sequence belongs to the ABC transporter superfamily. Aliphatic sulfonates importer (TC 3.A.1.17.2) family. In terms of assembly, the complex is composed of two ATP-binding proteins (SsuB), two transmembrane proteins (SsuC) and a solute-binding protein (SsuA).

It is found in the cell inner membrane. The enzyme catalyses ATP + H2O + aliphatic sulfonate-[sulfonate-binding protein]Side 1 = ADP + phosphate + aliphatic sulfonateSide 2 + [sulfonate-binding protein]Side 1.. Its function is as follows. Part of the ABC transporter complex SsuABC involved in aliphatic sulfonates import. Responsible for energy coupling to the transport system. The sequence is that of Aliphatic sulfonates import ATP-binding protein SsuB 1 from Burkholderia cenocepacia (strain HI2424).